Consider the following 332-residue polypeptide: 2,3-diketo-L-gulonate reductase (332 aa).

The active-site Proton donor is His44. Residues Ile168–Ser174, Trp224–Lys225, and Gly304–Glu306 each bind NAD(+).

The protein belongs to the LDH2/MDH2 oxidoreductase family. DlgD subfamily. In terms of assembly, homodimer.

It is found in the cytoplasm. The enzyme catalyses 3-dehydro-L-gulonate + NAD(+) = 2,3-dioxo-L-gulonate + NADH + H(+). It carries out the reaction 3-dehydro-L-gulonate + NADP(+) = 2,3-dioxo-L-gulonate + NADPH + H(+). In terms of biological role, catalyzes the reduction of 2,3-diketo-L-gulonate in the presence of NADH, to form 3-keto-L-gulonate. This chain is 2,3-diketo-L-gulonate reductase, found in Salmonella typhi.